We begin with the raw amino-acid sequence, 544 residues long: CRISPR-associated endodeoxyribonuclease Cas12f2 (544 aa).

The tract at residues 1 to 195 (MNMSKTTISV…KPNERETRYV (195 aa)) is recognition domain (REC). Residues 196 to 326 (HISKLESPSK…YLQYTYEAEV (131 aa)) form a wedge domain (WED) region. The interval 327–334 (EANKEYAG) is linker. Residues 335 to 485 (CLGVDIGCSK…VYVKPDYTSQ (151 aa)) form a ruvC-I region. Active-site residues include Asp-339 and Glu-430. A target nucleic acid-binding (TNB) region spans residues 486-520 (TCSSCGADKEKTERPSQAIFRCLNPTCRYYQRDIN). Zn(2+) is bound by residues Cys-487, Cys-490, Cys-507, and Cys-512. A ruvC-II region spans residues 521–541 (ADFNAAVNIAKKALNNTEVVT). Residue Asp-522 is part of the active site.

It belongs to the CRISPR-associated endonuclease Cas12f family. As to quaternary structure, an asymmetric homodimer. Guide RNA is probably required for dimerization. Mg(2+) is required as a cofactor. It depends on Zn(2+) as a cofactor.

CRISPR (clustered regularly interspaced short palindromic repeat), is an adaptive immune system that provides protection against mobile genetic elements (viruses, transposable elements and conjugative plasmids). CRISPR clusters contain sequences complementary to antecedent mobile elements and target invading nucleic acids. CRISPR clusters are transcribed and processed into CRISPR RNA (crRNA), which requires a trans-encoded small RNA (tracrRNA), but not this protein (in vitro). Recognizes a short motif in the CRISPR repeat sequences (the 5' PAM or protospacer adjacent motif, TTAT in this organism) to help distinguish self versus nonself, as targets within the CRISPR locus do not have PAMs. Upon expression in E.coli of this protein, a mini CRISPR array and the probable tracrRNA, has dsDNA endonuclease activity. DNA cleavage is centered around positions 21 base pairs 3' of PAM. The mini system does not protect E.coli against transformation by foreign plasmids. This Micrarchaeota archaeon (strain CG1_02_47_40) protein is CRISPR-associated endodeoxyribonuclease Cas12f2.